A 751-amino-acid polypeptide reads, in one-letter code: Translation initiation factor IF-2, chloroplastic (751 aa).

A disordered region spans residues 86–156 (KKEKSKFRKD…KSKKQTSAKN (71 aa)). Over residues 93–106 (RKDEDYDSLKREDN) the composition is skewed to basic and acidic residues. Residues 129–143 (VSNTNTLNKKNVVKS) show a composition bias toward low complexity. One can recognise a tr-type G domain in the interval 250–423 (KRPPVIAIMG…ILVSEIEDLK (174 aa)). Residues 259-266 (GHVDHGKT) form a G1 region. 259 to 266 (GHVDHGKT) lines the GTP pocket. A G2 region spans residues 284 to 288 (GITQK). Residues 309 to 312 (DTPG) are G3. GTP contacts are provided by residues 309 to 313 (DTPGH) and 363 to 366 (NKID). The segment at 363-366 (NKID) is G4. Residues 399 to 401 (SAM) are G5.

This sequence belongs to the TRAFAC class translation factor GTPase superfamily. Classic translation factor GTPase family. IF-2 subfamily.

It is found in the plastid. It localises to the chloroplast. One of the essential components for the initiation of protein synthesis. Protects formylmethionyl-tRNA from spontaneous hydrolysis and promotes its binding to the 30S ribosomal subunits. Also involved in the hydrolysis of GTP during the formation of the 70S ribosomal complex. This chain is Translation initiation factor IF-2, chloroplastic (infB), found in Rhodomonas salina (Cryptomonas salina).